A 400-amino-acid polypeptide reads, in one-letter code: Tryptophan synthase beta chain (400 aa).

At Lys-91 the chain carries N6-(pyridoxal phosphate)lysine.

This sequence belongs to the TrpB family. As to quaternary structure, tetramer of two alpha and two beta chains. Pyridoxal 5'-phosphate is required as a cofactor.

It carries out the reaction (1S,2R)-1-C-(indol-3-yl)glycerol 3-phosphate + L-serine = D-glyceraldehyde 3-phosphate + L-tryptophan + H2O. It participates in amino-acid biosynthesis; L-tryptophan biosynthesis; L-tryptophan from chorismate: step 5/5. Its function is as follows. The beta subunit is responsible for the synthesis of L-tryptophan from indole and L-serine. The chain is Tryptophan synthase beta chain from Listeria monocytogenes serotype 4b (strain CLIP80459).